Here is a 264-residue protein sequence, read N- to C-terminus: Homeobox protein vent1 (264 aa).

2 stretches are compositionally biased toward basic and acidic residues: residues 16 to 26 (KEEATDGKDSM) and 44 to 59 (YAKE…DVQE). Residues 16–140 (KEEATDGKDS…RLRTAFTPQQ (125 aa)) form a disordered region. A compositionally biased stretch (polar residues) spans 60-80 (HTTSFQCSLGEQVINRPSANP). The span at 117–130 (TEQREKSPKSDLQR) shows a compositional bias: basic and acidic residues. Residues 129-188 (QRRLRTAFTPQQISKLEQAFNKQRYLGAPERKKLATSLQLSEIQVKTWFQNRRMKLKRQI) constitute a DNA-binding region (homeobox).

Expressed in the ventral marginal zone of gastrulae. At stage 11.5, also expressed in the ventral region of the animal cap (ectoderm). At the end of gastrulation, predominantly localized to the ventral and lateral regions of the closing slit blastopore. At early tail bud stage, expression is maintained only in the forming proctodeum.

The protein resides in the nucleus. Functionally, transcriptional repressor. Cooperates with vent2 in a ventral signaling pathway downstream of bmp4, which antagonizes the Spemann organizer and dorsal mesoderm formation, and leads to ventral mesoderm formation. Acts downstream of bmp4 to repress transcription of foxa4-B/XFD-1'. Binds to DNA with preference for the target sequence 5'-CTATT[T/C]G-3'. Also binds 5'-TGCATTTTG-3' at a lower frequency, and occasionally 5'-TTGATC-3'. Binds to the homeobox 2 (HBX2) repressor element in the promoter of the myf5 gene and represses myf5 transcription in the ventral domain. This chain is Homeobox protein vent1 (vent1), found in Xenopus laevis (African clawed frog).